We begin with the raw amino-acid sequence, 409 residues long: Magnesium-protoporphyrin IX monomethyl ester [oxidative] cyclase, chloroplastic (409 aa).

Disordered regions lie at residues 1-23 and 36-60; these read MAAE…SNPS and RMSA…TKKE. The transit peptide at 1–36 directs the protein to the chloroplast; sequence MAAEMALVKPISKFSSPKLSNPSKFLSGRRFSTVIR. The span at 13-23 shows a compositional bias: polar residues; sequence KFSSPKLSNPS.

This sequence belongs to the AcsF family. Part of the FLU-containing chloroplast membrane complex composed of FLU, CRD1, PORB, PORC, CHLP and HEMA1. Interacts with YCF54 in chloroplasts. Fe cation is required as a cofactor.

It is found in the plastid. The protein localises to the chloroplast inner membrane. The protein resides in the chloroplast thylakoid membrane. It catalyses the reaction Mg-protoporphyrin IX 13-monomethyl ester + 3 NADPH + 3 O2 + 2 H(+) = 3,8-divinyl protochlorophyllide a + 3 NADP(+) + 5 H2O. It functions in the pathway porphyrin-containing compound metabolism; chlorophyll biosynthesis. Catalytic component of the MgProto monomethylester (MgProtoME) cyclase complex that catalyzes the formation of the isocyclic ring in chlorophyll biosynthesis. Mediates the cyclase reaction, which results in the formation of divinylprotochlorophyllide (Pchlide) characteristic of all chlorophylls from magnesium-protoporphyrin IX 13-monomethyl ester (MgPMME). This is Magnesium-protoporphyrin IX monomethyl ester [oxidative] cyclase, chloroplastic from Arabidopsis thaliana (Mouse-ear cress).